Here is a 1199-residue protein sequence, read N- to C-terminus: RNA-binding protein 20 (1199 aa).

Disordered regions lie at residues 1 to 55 (MVLA…PQAS), 163 to 186 (PSTAIAFSPPSQTGGPGPSVSLPS), and 320 to 346 (ERPPGFSGQNKPDITAGPSLWAPPASQ). Positions 25 to 42 (VMPGVQGPSVPQGQQGMQ) are enriched in low complexity. Residues 43–52 (PLPPPPPPQP) show a composition bias toward pro residues. Over residues 170 to 183 (SPPSQTGGPGPSVS) the composition is skewed to low complexity. The segment at 410–444 (HLPHICSICDKKVFDLKDWELHVKGKLHAQKCLLF) adopts a U1-type zinc-finger fold. The 76-residue stretch at 520–595 (RVVHICNLPE…EKLLIRMSTR (76 aa)) folds into the RRM domain. The span at 626-636 (EADRYGPERPR) shows a compositional bias: basic and acidic residues. Disordered stretches follow at residues 626 to 685 (EADR…NGED), 720 to 884 (REKY…YPTN), and 944 to 1077 (GETL…SQAC). The RS stretch occupies residues 630–649 (YGPERPRSRSPMSRSLSPRS). Residues S637, S639, S642, S644, and S651 each carry the phosphoserine modification. A compositionally biased stretch (low complexity) spans 638–649 (RSPMSRSLSPRS). Residues 667–685 (YAWRDEDRETVPRRENGED) show a composition bias toward basic and acidic residues. S728 bears the Phosphoserine mark. Composition is skewed to basic and acidic residues over residues 739–758 (KGREDGYHRKEPKAKLDKYP), 770–831 (RKEE…KESQ), and 859–868 (ENTRTKKGQD). S787 carries the phosphoserine modification. 3 positions are modified to phosphoserine: S871, S873, and S955. A compositionally biased stretch (polar residues) spans 962–971 (VPSTSASCPN). 9 positions are modified to phosphoserine: S991, S1026, S1038, S1049, S1054, S1058, S1070, S1088, and S1093. Positions 1042–1055 (DDCKARGSPEDGSH) are enriched in basic and acidic residues. Polar residues predominate over residues 1067–1077 (PTESDLQSQAC). A Matrin-type zinc finger spans residues 1133–1164 (FYCKLCGLFYTSEEAAKVSHCRSTVHYRNLQK). The tract at residues 1172–1199 (EGLKETEGTDSPSPERGGIGPHLERKKL) is disordered. Phosphoserine occurs at positions 1182 and 1184.

Associates with components of the U1 and U2 U1 small nuclear ribonucleoprotein complexes. In terms of processing, phosphorylation regulates the subcellular localization. Phosphorylation of Ser-637 and Ser-639 in the RS (arginine/serine-rich) region promotes nuclear localization of the protein. In contrast, phosphorylation of the C-terminal disordered region promotes localization to cytoplasmic ribonucleoprotein granules. In terms of tissue distribution, predominantly expressed in striated muscle, with highest expression in the heart. In differentiating myoblasts, expression correlates with sarcomere assembly: expression peaks when alpha-actinin is localized mainly in mature Z bodies within the nascent myofiber and expression declines as the sarcomeres continue to mature. Also expressed in kidney.

It localises to the nucleus. It is found in the cytoplasm. The protein resides in the cytoplasmic ribonucleoprotein granule. Functionally, RNA-binding protein that acts as a regulator of mRNA splicing of a subset of genes encoding key structural proteins involved in cardiac development, such as TTN (Titin), CACNA1C, CAMK2D or PDLIM5/ENH. Acts as a repressor of mRNA splicing: specifically binds the 5'UCUU-3' motif that is predominantly found within intronic sequences of pre-mRNAs, leading to the exclusion of specific exons in target transcripts. RBM20-mediated exon skipping is hormone-dependent and is essential for TTN isoform transition in both cardiac and skeletal muscles. RBM20-mediated exon skipping of TTN provides substrates for the formation of circular RNA (circRNAs) from the TTN transcripts. Together with RBM24, promotes the expression of short isoforms of PDLIM5/ENH in cardiomyocytes. This is RNA-binding protein 20 from Mus musculus (Mouse).